The sequence spans 606 residues: Glutamine--fructose-6-phosphate aminotransferase [isomerizing] (606 aa).

Cys2 acts as the Nucleophile; for GATase activity in catalysis. Positions Cys2–Gly218 constitute a Glutamine amidotransferase type-2 domain. SIS domains lie at Phe278–Val424 and Leu448–Pro596. Residue Lys601 is the For Fru-6P isomerization activity of the active site.

In terms of assembly, homodimer.

It is found in the cytoplasm. The catalysed reaction is D-fructose 6-phosphate + L-glutamine = D-glucosamine 6-phosphate + L-glutamate. Its function is as follows. Catalyzes the first step in hexosamine metabolism, converting fructose-6P into glucosamine-6P using glutamine as a nitrogen source. The chain is Glutamine--fructose-6-phosphate aminotransferase [isomerizing] from Chlamydia trachomatis serovar D (strain ATCC VR-885 / DSM 19411 / UW-3/Cx).